The following is a 328-amino-acid chain: Cytochrome c biogenesis protein CcsA (328 aa).

Helical transmembrane passes span 13 to 33 (ISFSVISIVLTIYFLTLLVNL), 46 to 66 (GIVITFFGITGLLFTRWIYSG), 73 to 93 (LYESLIFLSWAFSIIHMVSYF), 101 to 121 (LNAITAPSAIFIQGFATSGLL), 146 to 166 (MILGYGALLCGSLLSMALLVI), 234 to 254 (IISLGFIFLTVGILSGAVWAN), 263 to 283 (WDPKETWAFITWTIFAIYLHI), and 295 to 315 (AIVASIGFILIWICYFGVNLL).

The protein belongs to the CcmF/CycK/Ccl1/NrfE/CcsA family. May interact with Ccs1.

It localises to the plastid. The protein localises to the chloroplast thylakoid membrane. Its function is as follows. Required during biogenesis of c-type cytochromes (cytochrome c6 and cytochrome f) at the step of heme attachment. The chain is Cytochrome c biogenesis protein CcsA from Nasturtium officinale (Watercress).